A 113-amino-acid chain; its full sequence is Non-structural protein 1 (113 aa).

This sequence belongs to the pneumovirus non-structural protein 1 family.

Its subcellular location is the host cytoplasm. It is found in the host mitochondrion. Functionally, may play a minor role in antagonizing the type I IFN-mediated antiviral response. Additionally, NS1 may serve some inhibitory role in viral transcription and RNA replication. In Mus musculus (Mouse), this protein is Non-structural protein 1 (1C).